The following is a 769-amino-acid chain: Metal transporter CNNM4 (769 aa).

The Extracellular portion of the chain corresponds to 1–175; that stretch reads MAASAGCYYG…RLRVLEEEKP (175 aa). 2 N-linked (GlcNAc...) asparagine glycosylation sites follow: Asn-99 and Asn-115. The CNNM transmembrane domain maps to 175 to 355; that stretch reads PLLPIWLQAC…EPYSGIVREE (181 aa). The helical transmembrane segment at 176–196 threads the bilayer; sequence LLPIWLQACIIAVLLTLSGIF. The Cytoplasmic segment spans residues 197 to 237; that stretch reads SGLNLGLMALDPMELRVVQRCGTEKEKRYASKIEPVRRKGN. The segment at residues 238 to 258 is an intramembrane region (helical); the sequence is YLLCSLLLGNVLVNTTLTALL. Over 259–261 the chain is Cytoplasmic; sequence DEL. The helical transmembrane segment at 262–282 threads the bilayer; that stretch reads IGSGLAAVLASTTGIVVLGEI. The Extracellular portion of the chain corresponds to 283–292; it reads VPQALCSRHG. A helical membrane pass occupies residues 293–313; sequence LAVGANTLWLTRIFMLLTFPV. The Cytoplasmic segment spans residues 314-769; that stretch reads AYPVSRLLDC…SQHSLQHNAV (456 aa). CBS domains follow at residues 374–435 and 442–508; these read MTKV…CTPL and YSHP…ILDE. Residues 717–769 are disordered; that stretch reads LMSSRLDSSPQSPEGGTRKPDSTLSERSEVLEDETTSLLNQRNSQHSLQHNAV. A compositionally biased stretch (polar residues) spans 721–730; that stretch reads RLDSSPQSPE. The segment covering 732–746 has biased composition (basic and acidic residues); sequence GTRKPDSTLSERSEV. Residues 752–769 show a composition bias toward polar residues; that stretch reads TSLLNQRNSQHSLQHNAV.

Belongs to the ACDP family.

The protein resides in the cell membrane. Its function is as follows. Probable metal transporter. In Xenopus tropicalis (Western clawed frog), this protein is Metal transporter CNNM4 (cnnm4).